A 172-amino-acid chain; its full sequence is 3-hydroxydecanoyl-[acyl-carrier-protein] dehydratase (172 aa).

Histidine 71 is a catalytic residue.

It belongs to the thioester dehydratase family. FabA subfamily. Homodimer.

The protein resides in the cytoplasm. The catalysed reaction is a (3R)-hydroxyacyl-[ACP] = a (2E)-enoyl-[ACP] + H2O. The enzyme catalyses (3R)-hydroxydecanoyl-[ACP] = (2E)-decenoyl-[ACP] + H2O. It carries out the reaction (2E)-decenoyl-[ACP] = (3Z)-decenoyl-[ACP]. The protein operates within lipid metabolism; fatty acid biosynthesis. Necessary for the introduction of cis unsaturation into fatty acids. Catalyzes the dehydration of (3R)-3-hydroxydecanoyl-ACP to E-(2)-decenoyl-ACP and then its isomerization to Z-(3)-decenoyl-ACP. Can catalyze the dehydratase reaction for beta-hydroxyacyl-ACPs with saturated chain lengths up to 16:0, being most active on intermediate chain length. This chain is 3-hydroxydecanoyl-[acyl-carrier-protein] dehydratase, found in Enterobacter sp. (strain 638).